A 156-amino-acid chain; its full sequence is Small ribosomal subunit protein uS7 (156 aa).

This sequence belongs to the universal ribosomal protein uS7 family. As to quaternary structure, part of the 30S ribosomal subunit. Contacts proteins S9 and S11.

In terms of biological role, one of the primary rRNA binding proteins, it binds directly to 16S rRNA where it nucleates assembly of the head domain of the 30S subunit. Is located at the subunit interface close to the decoding center, probably blocks exit of the E-site tRNA. The chain is Small ribosomal subunit protein uS7 from Prochlorococcus marinus (strain MIT 9312).